The chain runs to 232 residues: 2,3,4,5-tetrahydropyridine-2,6-dicarboxylate N-acetyltransferase (232 aa).

It belongs to the transferase hexapeptide repeat family. DapH subfamily.

The enzyme catalyses (S)-2,3,4,5-tetrahydrodipicolinate + acetyl-CoA + H2O = L-2-acetamido-6-oxoheptanedioate + CoA. It participates in amino-acid biosynthesis; L-lysine biosynthesis via DAP pathway; LL-2,6-diaminopimelate from (S)-tetrahydrodipicolinate (acetylase route): step 1/3. Catalyzes the transfer of an acetyl group from acetyl-CoA to tetrahydrodipicolinate. This chain is 2,3,4,5-tetrahydropyridine-2,6-dicarboxylate N-acetyltransferase, found in Streptococcus thermophilus (strain CNRZ 1066).